Consider the following 89-residue polypeptide: Small ribosomal subunit protein uS15 (89 aa).

Belongs to the universal ribosomal protein uS15 family. In terms of assembly, part of the 30S ribosomal subunit. Forms a bridge to the 50S subunit in the 70S ribosome, contacting the 23S rRNA.

One of the primary rRNA binding proteins, it binds directly to 16S rRNA where it helps nucleate assembly of the platform of the 30S subunit by binding and bridging several RNA helices of the 16S rRNA. Functionally, forms an intersubunit bridge (bridge B4) with the 23S rRNA of the 50S subunit in the ribosome. In Thermobifida fusca (strain YX), this protein is Small ribosomal subunit protein uS15.